Here is a 537-residue protein sequence, read N- to C-terminus: Putative cysteine ligase BshC (537 aa).

Positions glutamate 415 to leucine 439 form a coiled coil.

The protein belongs to the BshC family.

In terms of biological role, involved in bacillithiol (BSH) biosynthesis. May catalyze the last step of the pathway, the addition of cysteine to glucosamine malate (GlcN-Mal) to generate BSH. In Staphylococcus epidermidis (strain ATCC 12228 / FDA PCI 1200), this protein is Putative cysteine ligase BshC.